Reading from the N-terminus, the 20-residue chain is Disintegrin (20 aa).

Residues 1-20 (EAGEECDCGTPENPCCDAAT) form the Disintegrin domain. 2 disulfide bridges follow: Cys-6–Cys-15 and Cys-8–Cys-16.

This sequence belongs to the venom metalloproteinase (M12B) family. P-II subfamily. P-IIa sub-subfamily. As to quaternary structure, monomer. As to expression, expressed by the venom gland.

Its subcellular location is the secreted. In terms of biological role, inhibits fibrinogen interaction with platelets. Acts by binding to alpha-IIb/beta-3 (ITGA2B/ITGB3) on the platelet surface and inhibits aggregation induced by ADP, thrombin, platelet-activating factor and collagen. In Bothrops fonsecai (Fonseca's lancehead), this protein is Disintegrin.